We begin with the raw amino-acid sequence, 792 residues long: Receptor-like protein 54 (792 aa).

An N-terminal signal peptide occupies residues 1 to 21 (MKSNLAVFFITCFFCCVFVTS). The Extracellular portion of the chain corresponds to 22–758 (DSVYTLPFPF…PKQEHALNWK (737 aa)). N68 and N107 each carry an N-linked (GlcNAc...) asparagine glycan. LRR repeat units follow at residues 114–137 (QHLR…GFGR), 139–162 (TYLE…ISNL), 163–187 (SRLT…SLTL), 189–209 (ENID…LFTM), 211–233 (FLVS…NYSA), 235–258 (SKLL…ISKL), 259–282 (ANLI…FLLF), 283–302 (KSLV…GTGS), 303–324 (ENLT…FIKD), 325–349 (LQRL…LWTL), 351–374 (SMLH…IILN), and 375–399 (SSIS…PYVN). An N-linked (GlcNAc...) asparagine glycan is attached at N161. An N-linked (GlcNAc...) asparagine glycan is attached at N230. N-linked (GlcNAc...) asparagine glycosylation is found at N304 and N314. N-linked (GlcNAc...) asparagine glycans are attached at residues N356 and N374. Residues 400–418 (IMAASNNYFTGGIPLIFCK) form an LRR 13; degenerate repeat. LRR repeat units lie at residues 419-443 (RYRL…LTNV), 444-470 (SLGL…RLVL), 472-489 (DVGH…LVNC), and 490-515 (TTLK…ALTR). 5 N-linked (GlcNAc...) asparagine glycosylation sites follow: N431, N442, N454, N488, and N503. The LRR 18; degenerate repeat unit spans residues 516–536 (LEIIVLRSNRFHGPISSPEVS). LRR repeat units follow at residues 539–563 (FTAL…YFAN), 614–637 (DTYT…IGDL), 638–661 (KSLI…LAKL), 662–685 (KQLE…LREL), and 687–709 (FLGY…TQVG). N-linked (GlcNAc...) asparagine glycans are attached at residues N553 and N563. N-linked (GlcNAc...) asparagine glycosylation is present at N647. N-linked (GlcNAc...) asparagine glycosylation occurs at N692. A helical transmembrane segment spans residues 759–779 (AAAIGYGPGVLFGLAIGQAFA). The Cytoplasmic portion of the chain corresponds to 780 to 792 (RYKPVLFYKLFRL).

This sequence belongs to the RLP family.

It localises to the cell membrane. In Arabidopsis thaliana (Mouse-ear cress), this protein is Receptor-like protein 54.